The primary structure comprises 218 residues: Pyridoxine/pyridoxamine 5'-phosphate oxidase (218 aa).

Substrate contacts are provided by residues 12 to 15 (RLSY) and Arg70. Residues 65-70 (RTVLLR), 80-81 (YT), Lys87, and Gln109 contribute to the FMN site. Substrate contacts are provided by Tyr127, Arg131, and Ser135. FMN-binding positions include 145–146 (QS) and Trp191. Position 197 to 199 (197 to 199 (RLH)) interacts with substrate. Arg201 contacts FMN.

It belongs to the pyridoxamine 5'-phosphate oxidase family. Homodimer. FMN is required as a cofactor.

It catalyses the reaction pyridoxamine 5'-phosphate + O2 + H2O = pyridoxal 5'-phosphate + H2O2 + NH4(+). The enzyme catalyses pyridoxine 5'-phosphate + O2 = pyridoxal 5'-phosphate + H2O2. It functions in the pathway cofactor metabolism; pyridoxal 5'-phosphate salvage; pyridoxal 5'-phosphate from pyridoxamine 5'-phosphate: step 1/1. It participates in cofactor metabolism; pyridoxal 5'-phosphate salvage; pyridoxal 5'-phosphate from pyridoxine 5'-phosphate: step 1/1. In terms of biological role, catalyzes the oxidation of either pyridoxine 5'-phosphate (PNP) or pyridoxamine 5'-phosphate (PMP) into pyridoxal 5'-phosphate (PLP). This Acinetobacter baumannii (strain AB0057) protein is Pyridoxine/pyridoxamine 5'-phosphate oxidase.